The primary structure comprises 198 residues: NADH-quinone oxidoreductase subunit C (198 aa).

The protein belongs to the complex I 30 kDa subunit family. In terms of assembly, NDH-1 is composed of 14 different subunits. Subunits NuoB, C, D, E, F, and G constitute the peripheral sector of the complex.

Its subcellular location is the cell inner membrane. The catalysed reaction is a quinone + NADH + 5 H(+)(in) = a quinol + NAD(+) + 4 H(+)(out). In terms of biological role, NDH-1 shuttles electrons from NADH, via FMN and iron-sulfur (Fe-S) centers, to quinones in the respiratory chain. The immediate electron acceptor for the enzyme in this species is believed to be ubiquinone. Couples the redox reaction to proton translocation (for every two electrons transferred, four hydrogen ions are translocated across the cytoplasmic membrane), and thus conserves the redox energy in a proton gradient. This chain is NADH-quinone oxidoreductase subunit C, found in Chromobacterium violaceum (strain ATCC 12472 / DSM 30191 / JCM 1249 / CCUG 213 / NBRC 12614 / NCIMB 9131 / NCTC 9757 / MK).